We begin with the raw amino-acid sequence, 2091 residues long: Protein Ycf2 (2091 aa).

Positions Asp-191 to Ser-210 are disordered. ATP is bound at residue Gly-1432 to Ser-1439.

Belongs to the Ycf2 family.

Its subcellular location is the plastid. It localises to the chloroplast stroma. Probable ATPase of unknown function. Its presence in a non-photosynthetic plant (Epifagus virginiana) and experiments in tobacco indicate that it has an essential function which is probably not related to photosynthesis. This is Protein Ycf2 from Daucus carota (Wild carrot).